A 271-amino-acid chain; its full sequence is Glutamate racemase (271 aa).

Residues 10–11 (DS) and 42–43 (YG) contribute to the substrate site. Residue cysteine 73 is the Proton donor/acceptor of the active site. 74–75 (NS) serves as a coordination point for substrate. Catalysis depends on cysteine 183, which acts as the Proton donor/acceptor. Residue 184-185 (TH) coordinates substrate.

The protein belongs to the aspartate/glutamate racemases family.

It carries out the reaction L-glutamate = D-glutamate. The protein operates within cell wall biogenesis; peptidoglycan biosynthesis. Its function is as follows. Provides the (R)-glutamate required for cell wall biosynthesis. This Saccharopolyspora erythraea (strain ATCC 11635 / DSM 40517 / JCM 4748 / NBRC 13426 / NCIMB 8594 / NRRL 2338) protein is Glutamate racemase.